The following is a 721-amino-acid chain: 1,4-alpha-glucan branching enzyme GlgB (721 aa).

The active-site Nucleophile is Asp404. Catalysis depends on Glu457, which acts as the Proton donor.

This sequence belongs to the glycosyl hydrolase 13 family. GlgB subfamily. As to quaternary structure, monomer.

It catalyses the reaction Transfers a segment of a (1-&gt;4)-alpha-D-glucan chain to a primary hydroxy group in a similar glucan chain.. Its pathway is glycan biosynthesis; glycogen biosynthesis. Functionally, catalyzes the formation of the alpha-1,6-glucosidic linkages in glycogen by scission of a 1,4-alpha-linked oligosaccharide from growing alpha-1,4-glucan chains and the subsequent attachment of the oligosaccharide to the alpha-1,6 position. The polypeptide is 1,4-alpha-glucan branching enzyme GlgB (Bradyrhizobium diazoefficiens (strain JCM 10833 / BCRC 13528 / IAM 13628 / NBRC 14792 / USDA 110)).